The primary structure comprises 230 residues: Uracil-DNA glycosylase (230 aa).

Residue D70 is the Proton acceptor of the active site.

Belongs to the uracil-DNA glycosylase (UDG) superfamily. UNG family.

It is found in the cytoplasm. It catalyses the reaction Hydrolyzes single-stranded DNA or mismatched double-stranded DNA and polynucleotides, releasing free uracil.. Functionally, excises uracil residues from the DNA which can arise as a result of misincorporation of dUMP residues by DNA polymerase or due to deamination of cytosine. The protein is Uracil-DNA glycosylase of Pseudomonas fluorescens (strain SBW25).